Consider the following 475-residue polypeptide: Ankyrin repeat, SAM and basic leucine zipper domain-containing protein 1 (475 aa).

The segment at 1 to 25 (MAAGALRGLPVAGGGESSESEDDGW) is disordered. Phosphoserine is present on residues S17, S18, and S20. 6 ANK repeats span residues 45-74 (EKKE…SVDS), 78-107 (YGWT…NASF), 110-144 (DKQS…DPNV), 148-177 (RLMT…EVNT), 181-210 (NGYT…NKML), and 214-243 (DGKM…PLEG). Residues 272–334 (SYTAFGDLEV…KILAALKELQ (63 aa)) enclose the SAM domain.

As to quaternary structure, interacts with DDX4, PIWIL1, RANBP9 and TDRD1.

It localises to the cytoplasm. Its function is as follows. Plays a central role during spermatogenesis by repressing transposable elements and preventing their mobilization, which is essential for the germline integrity. Acts via the piRNA metabolic process, which mediates the repression of transposable elements during meiosis by forming complexes composed of piRNAs and Piwi proteins and governs the methylation and subsequent repression of transposons. Its association with pi-bodies suggests a participation in the primary piRNAs metabolic process. Required prior to the pachytene stage to facilitate the production of multiple types of piRNAs, including those associated with repeats involved in the regulation of retrotransposons. May act by mediating protein-protein interactions during germ cell maturation. The protein is Ankyrin repeat, SAM and basic leucine zipper domain-containing protein 1 (ASZ1) of Pongo abelii (Sumatran orangutan).